Here is a 120-residue protein sequence, read N- to C-terminus: Small ribosomal subunit protein uS12 (120 aa).

The residue at position 88 (D88) is a 3-methylthioaspartic acid.

The protein belongs to the universal ribosomal protein uS12 family. Part of the 30S ribosomal subunit. Contacts proteins S8 and S17. May interact with IF1 in the 30S initiation complex.

Functionally, with S4 and S5 plays an important role in translational accuracy. In terms of biological role, interacts with and stabilizes bases of the 16S rRNA that are involved in tRNA selection in the A site and with the mRNA backbone. Located at the interface of the 30S and 50S subunits, it traverses the body of the 30S subunit contacting proteins on the other side and probably holding the rRNA structure together. The combined cluster of proteins S8, S12 and S17 appears to hold together the shoulder and platform of the 30S subunit. This Carsonella ruddii (strain PV) protein is Small ribosomal subunit protein uS12.